The chain runs to 289 residues: Aquaporin PIP1-1 (289 aa).

Positions 1 to 36 (MEGKEEDVRLGANRYSERQPIGTAAQGAGDDKDYKE) are disordered. A run of 2 helical transmembrane segments spans residues 58-78 (IAEFVATFLFLYITILTVMGV) and 93-115 (IAWSFGGMIFALVYCTAGISGGH). Residues 117–119 (NPA) carry the NPA 1 motif. A run of 3 helical transmembrane segments spans residues 136-156 (IFYIVMQCLGAICGAGVVKGF), 178-198 (GDGLGAEIVGTFILVYTVFSA), and 212-232 (ILAPLPIGFAVFLVHLATIPI). The short motif at 238 to 240 (NPA) is the NPA 2 element. Residues 260 to 280 (IFWVGPFVGAALAAIYHQVII) traverse the membrane as a helical segment.

The protein belongs to the MIP/aquaporin (TC 1.A.8) family. PIP (TC 1.A.8.11) subfamily. Expressed in roots, leaves and anthers.

Its subcellular location is the cell membrane. In terms of biological role, may function as water channel to facilitate the transport of water across cell membrane. The polypeptide is Aquaporin PIP1-1 (PIP1-1) (Oryza sativa subsp. japonica (Rice)).